Consider the following 578-residue polypeptide: GTP diphosphokinase CRSH3, chloroplastic (578 aa).

A chloroplast-targeting transit peptide spans 1–45; it reads MANAGVNETVAVAVAIDAPGVGHDHGAAGEVRRPSTRRLAPAGSG. An HD domain is found at 99-199; that stretch reads SVSRALVVAA…LELAVKLDAM (101 aa). 2 consecutive EF-hand domains span residues 468-503 and 506-537; these read ATAG…LGAG and DAEE…VKLK. Positions 481, 483, 485, 487, 492, 515, 517, 519, 521, and 526 each coordinate Ca(2+).

Belongs to the RelA/SpoT family. As to expression, expressed in roots and shoots.

It is found in the plastid. The protein localises to the chloroplast. The catalysed reaction is GTP + ATP = guanosine 3'-diphosphate 5'-triphosphate + AMP. Its activity is regulated as follows. Activated by calcium. Functionally, possesses calcium-dependent ppGpp (guanosine 3'-diphosphate 5'-diphosphate) synthetase activity in vitro and is able to functionally complement E.coli relA mutants. May be involved in a rapid plant ppGpp-mediated response to pathogens and other stresses. This chain is GTP diphosphokinase CRSH3, chloroplastic, found in Oryza sativa subsp. japonica (Rice).